Here is a 1500-residue protein sequence, read N- to C-terminus: Rho GTPase-activating protein 35 (1500 aa).

The tract at residues 1–266 (MMMARKQDVR…IPYFEALKQQ (266 aa)) is has GTPase activity, required for proper localization. GTP-binding positions include Lys28, 33–37 (IGKSC), Leu52, Ser56, 95–97 (EQT), 201–203 (KCD), and 229–231 (SAR). FF domains are found at residues 270–327 (IATA…HIHR), 368–422 (KLLE…HLEK), 429–483 (RAEM…HQKQ), and 485–550 (IDKA…HIHF). Tyr308 is modified (phosphotyrosine). Ser589 bears the Phosphoserine mark. The pG1 pseudoGTPase domain occupies 592 to 767 (DPNIDRINLV…LLDSKRNLNL (176 aa)). A phosphoserine mark is found at Ser770 and Ser773. The pG2 pseudoGTPase domain occupies 783–947 (RIVMCLMCGD…FKDVVDKKNI (165 aa)). Phosphoserine is present on residues Ser970, Ser975, Ser985, Ser1002, and Ser1073. The tract at residues 970 to 989 (SPRAGSPLCNSNLQDSEEDI) is disordered. Residues 1058-1090 (SYLDQGHRDGQRKSVSSSTWLPPDGFDPSDYAE) are disordered. A Phosphotyrosine modification is found at Tyr1088. Tyr1106 is modified (phosphotyrosine; by ABL2 and PTK6). Residues 1125 to 1142 (KAQSNGSGNGSDSEMDTS) are compositionally biased toward polar residues. A disordered region spans residues 1125–1147 (KAQSNGSGNGSDSEMDTSSLERG). Phosphoserine is present on residues Ser1135, Ser1143, Ser1151, Ser1177, Ser1180, and Ser1222. The segment at 1178–1208 (VGSDDELGPIRKKEEDQASQGYKGDNAVIPY) is disordered. Residues 1214 to 1237 (PRRRNILRSLRRNTKKPKPKPRPS) form a required for phospholipid binding and regulation of the substrate preference region. Position 1227 is a phosphothreonine (Thr1227). The residue at position 1237 (Ser1237) is a Phosphoserine. Positions 1250–1437 (VPLTTVVTPE…LFIQQCPFFF (188 aa)) constitute a Rho-GAP domain. The tract at residues 1444–1500 (EPPGATPSSPSAVASTVPFLTSTPVTSQPSPPQSPPPTPQSPMQALLPSQLQAEHTL) is disordered. Low complexity predominate over residues 1449–1471 (TPSSPSAVASTVPFLTSTPVTSQ). A compositionally biased stretch (pro residues) spans 1472–1483 (PSPPQSPPPTPQ). Phosphoserine is present on residues Ser1473 and Ser1477. At Thr1481 the chain carries Phosphothreonine. Ser1484 is modified (phosphoserine). The span at 1490 to 1500 (LPSQLQAEHTL) shows a compositional bias: polar residues.

As to quaternary structure, interacts with RASA1. Interacts with the general transcription factor GTF2I, the interaction sequesters GTF2I in the cytoplasm. Phosphorylation of Tyr-1106 by PTK6 promotes the association with RASA1, inactivating RHOA while activating RAS. Phosphorylation at Tyr-308 by PDGFRA inhibits binding to GTF2I. Phosphorylated by PRKCA at Ser-1222 and Thr-1227, induces relocalization from the cytoplasm to regions of plasma membrane ruffling and prevents the binding and substrate specificity regulation by phospholipids. In brain, phosphorylated by FYN and SRC. During focal adhesion formation, phosphorylated by MAPK1 and MAPK3 at the C-terminal region, probably at Ser-1452, Ser-1477, Thr-1481 and Ser-1484. Phosphorylation by MAPK1 and MAPK3 inhibits GAP function and localizes ARGHAP35 away from newly forming focal adhesions and stress fibers in cells spreading on fibronectin. Phosphorylation at Ser-1477 and Thr-1481 by GSK3B requires priming by MAPK and inhibits RhoGAP activity and modulates polarized cell migration. Strongly expressed in retina (photoreceptor layer) and brain. Expression is maximal in the occipital, frontal, temporal lobe and also the cerebellum. Medium expression in the medulla and also in kidney, lung, liver, heart and spleen.

The protein resides in the cytoplasm. The protein localises to the cytoskeleton. It localises to the cilium basal body. Its subcellular location is the nucleus. It is found in the cell membrane. In terms of biological role, rho GTPase-activating protein (GAP). Binds several acidic phospholipids which inhibits the Rho GAP activity to promote the Rac GAP activity. This binding is inhibited by phosphorylation by PRKCA. Involved in cell differentiation as well as cell adhesion and migration, plays an important role in retinal tissue morphogenesis, neural tube fusion, midline fusion of the cerebral hemispheres and mammary gland branching morphogenesis. Transduces signals from p21-ras to the nucleus, acting via the ras GTPase-activating protein (GAP). Transduces SRC-dependent signals from cell-surface adhesion molecules, such as laminin, to promote neurite outgrowth. Regulates axon outgrowth, guidance and fasciculation. Modulates Rho GTPase-dependent F-actin polymerization, organization and assembly, is involved in polarized cell migration and in the positive regulation of ciliogenesis and cilia elongation. During mammary gland development, is required in both the epithelial and stromal compartments for ductal outgrowth. Represses transcription of the glucocorticoid receptor by binding to the cis-acting regulatory sequence 5'-GAGAAAAGAAACTGGAGAAACTC-3'; this function is however unclear and would need additional experimental evidences. The polypeptide is Rho GTPase-activating protein 35 (Canis lupus familiaris (Dog)).